Here is a 480-residue protein sequence, read N- to C-terminus: MYSGSSDGESHDTSTQRKIPPASSMLWVRNLRRYIGSGAGLGSEALMELETKRILLEIFKEKQQKSQEAGTIPSFYKKKPEEGSISQRVQKLAKYRFLKKQSDLLLNADDLAAMWVCLRENCVIDDATGAEKMNYEDFCHIASVCTEQIGPKCRRFFSPSNFMKFEKDEAGRIAILPFYLYVMRTVSLTQARIDMSELDEDSDGFLHSDEMESYIGGLIPNLAQLRDMPPAFNQMYCRIASQKFFFFCDPHRRGRACIKKILLSNCLQELMELHQESEEEVTDTEQAENWFSLTSAQRICDMFLALDKDMSGSLCKQELKEYADGTLTEIFIERVFDEHVRRGKIVAGNSREMDFDSFLDFVLALENKDTPEGLTYLFRCLDLQGRGFLTTADIHSLFRDVHQKWIEGGNYELCIEDVRDEIWDMVKPSDPLKITLGDLLGCKQGGTVASMLIDVRGFWAHDNRENLLQEEEEPPEEESQ.

EF-hand domains are found at residues 186–221, 294–329, and 369–404; these read VSLTQARIDMSELDEDSDGFLHSDEMESYIGGLIPN, TSAQRICDMFLALDKDMSGSLCKQELKEYADGTLTE, and DTPEGLTYLFRCLDLQGRGFLTTADIHSLFRDVHQK. Residues D307, D309, S311, S313, and E318 each contribute to the Ca(2+) site.

In terms of assembly, interacts with PP2AA1. In terms of tissue distribution, widely expressed.

The protein localises to the cytoplasm. It is found in the cytoskeleton. Functionally, probable regulatory subunit of type 2A protein phosphatase involved in the control of the dynamic organization of the cortical cytoskeleton. Plays an important role in the organization of interphase microtubule arrays in part through the regulation of nucleation geometry. Required for the reorganization of cortical arrays in response to light. The chain is Probable serine/threonine-protein phosphatase 2A regulatory subunit B'' subunit TON2 (TON2) from Arabidopsis thaliana (Mouse-ear cress).